We begin with the raw amino-acid sequence, 530 residues long: UDP-glucuronosyltransferase 2A3 (530 aa).

A signal peptide spans 1 to 23 (MAPGKLASAVLLLLLCCAGSGFC). The Extracellular segment spans residues 24 to 494 (GKVLVWPCEM…SWFQYHSLDV (471 aa)). Asn316 carries an N-linked (GlcNAc...) asparagine glycan. The helical transmembrane segment at 495–515 (IGFLLACVASAILLVTKCCLF) threads the bilayer. Residues 516–530 (SFQNFIKIGKRIKKE) lie on the Cytoplasmic side of the membrane.

It belongs to the UDP-glycosyltransferase family. As to expression, specifically expressed in liver and small intestine.

It localises to the membrane. The catalysed reaction is glucuronate acceptor + UDP-alpha-D-glucuronate = acceptor beta-D-glucuronoside + UDP + H(+). In terms of biological role, UDP-glucuronosyltransferases catalyze phase II biotransformation reactions in which lipophilic substrates are conjugated with glucuronic acid to increase water solubility and enhance excretion. They are of major importance in the conjugation and subsequent elimination of potentially toxic xenobiotics and endogenous compounds. This Cavia porcellus (Guinea pig) protein is UDP-glucuronosyltransferase 2A3 (UGT2A3).